Reading from the N-terminus, the 603-residue chain is Cell division control protein 48 homolog B (603 aa).

ATP-binding positions include 63–70 (GPPGTGKT) and 327–334 (GPPGCSKT).

This sequence belongs to the AAA ATPase family.

The protein localises to the nucleus. Its subcellular location is the cytoplasm. It is found in the cytoskeleton. The protein resides in the phragmoplast. Its function is as follows. Probably functions in cell division and growth processes. Interacts with certain SNAREs as part of specialized membrane fusion events where vesicles from the same organelle fuse (homotypic fusion). This is Cell division control protein 48 homolog B (CDC48B) from Arabidopsis thaliana (Mouse-ear cress).